Here is a 1332-residue protein sequence, read N- to C-terminus: Misshapen-like kinase 1 (1332 aa).

The Protein kinase domain maps to 25–289 (FELVEVVGNG…TEQLLKFPFI (265 aa)). ATP-binding positions include 31–39 (VGNGTYGQV) and lysine 54. The Proton acceptor role is filled by aspartate 153. Disordered stretches follow at residues 300-347 (IQLK…NVPG), 363-383 (KSNSEALKQQQQLQQQQQRDP), and 395-887 (QRRI…GTMV). The span at 317-333 (EETEYEYSGSEEEDDSH) shows a compositional bias: acidic residues. Serine 324 and serine 326 each carry phosphoserine. The span at 371 to 380 (QQQQLQQQQQ) shows a compositional bias: low complexity. Basic and acidic residues predominate over residues 396 to 466 (RRIEEQKEER…EEQRQSERLQ (71 aa)). Over residues 479–497 (LQQQQQQQQLQKQQQQQLL) the composition is skewed to low complexity. Omega-N-methylarginine is present on residues arginine 501 and arginine 509. Basic and acidic residues predominate over residues 518 to 528 (AWAREVEERTR). Pro residues predominate over residues 547-561 (PEPPIPQASPGPPGP). Residues 598–608 (RSQSLQDQPTR) are compositionally biased toward polar residues. Serine 641 bears the Phosphoserine mark. A compositionally biased stretch (polar residues) spans 670 to 682 (QRTSSIATALNTS). Serine 701 carries the phosphoserine modification. Residues 716-729 (PKPPGPPAQPPGPP) show a composition bias toward pro residues. Residues 736–748 (DLRRSDPGWERSD) are compositionally biased toward basic and acidic residues. Phosphoserine is present on residues serine 754, serine 763, serine 777, serine 778, and serine 782. The segment covering 804-821 (LLKERTLDEAPRPPKKAM) has biased composition (basic and acidic residues). Acidic residues predominate over residues 828 to 841 (EEVESSEDDEEEGE). A mediates interaction with RAP2A region spans residues 866–1332 (MVVHDVEEIT…TLNRNCIMNW (467 aa)). The residue at position 891 (threonine 891) is a Phosphothreonine. The tract at residues 902-943 (DSNGYTNLPDVVQPSHSPTENSKGQSPPSKDGSGDYQSRGLV) is disordered. Positions 915-929 (PSHSPTENSKGQSPP) are enriched in polar residues. Residues 1019–1306 (NSEILCAALW…KFLCERNDKV (288 aa)) form the CNH domain.

Belongs to the protein kinase superfamily. STE Ser/Thr protein kinase family. STE20 subfamily. In terms of assembly, interacts with TANC1. Interacts with RAP2A. Isoform 4 interacts with NCK1. The cofactor is Mg(2+). In terms of processing, autophosphorylated. As to expression, expressed in the brain, isoform 2 is more abundant than isoform 1. Isoform 3 is ubiquitously expressed. Isoform 1 is most abundant in the skeletal muscle. Isoform 4 is ubiquitously expressed with relative high levels in brain, skeletal muscle, pancreas and testis.

It localises to the cytoplasm. Its subcellular location is the postsynaptic density. The protein resides in the cell projection. It is found in the axon. The protein localises to the dendrite. It localises to the golgi apparatus. It carries out the reaction L-seryl-[protein] + ATP = O-phospho-L-seryl-[protein] + ADP + H(+). It catalyses the reaction L-threonyl-[protein] + ATP = O-phospho-L-threonyl-[protein] + ADP + H(+). Its function is as follows. Serine/threonine kinase which acts as a negative regulator of Ras-related Rap2-mediated signal transduction to control neuronal structure and AMPA receptor trafficking. Required for normal synaptic density, dendrite complexity, as well as surface AMPA receptor expression in hippocampal neurons. Can activate the JNK and MAPK14/p38 pathways and mediates stimulation of the stress-activated protein kinase MAPK14/p38 MAPK downstream of the Raf/ERK pathway. Phosphorylates TANC1 upon stimulation by RAP2A, MBP and SMAD1. Has an essential function in negative selection of thymocytes, perhaps by coupling NCK1 to activation of JNK1. Activator of the Hippo signaling pathway which plays a pivotal role in organ size control and tumor suppression by restricting proliferation and promoting apoptosis. MAP4Ks act in parallel to and are partially redundant with STK3/MST2 and STK4/MST2 in the phosphorylation and activation of LATS1/2, and establish MAP4Ks as components of the expanded Hippo pathway. Functionally, isoform 4 can activate the JNK pathway. Involved in the regulation of actin cytoskeleton reorganization, cell-matrix adhesion, cell-cell adhesion and cell migration. This Homo sapiens (Human) protein is Misshapen-like kinase 1.